The primary structure comprises 364 residues: tRNA 2-selenouridine synthase (364 aa).

The Rhodanese domain occupies 14–136; that stretch reads VLNNTPLIDV…AFRNWLMQET (123 aa). C97 acts as the S-selanylcysteine intermediate in catalysis.

This sequence belongs to the SelU family. As to quaternary structure, monomer.

The catalysed reaction is 5-methylaminomethyl-2-thiouridine(34) in tRNA + selenophosphate + (2E)-geranyl diphosphate + H2O + H(+) = 5-methylaminomethyl-2-selenouridine(34) in tRNA + (2E)-thiogeraniol + phosphate + diphosphate. The enzyme catalyses 5-methylaminomethyl-2-thiouridine(34) in tRNA + (2E)-geranyl diphosphate = 5-methylaminomethyl-S-(2E)-geranyl-thiouridine(34) in tRNA + diphosphate. It catalyses the reaction 5-methylaminomethyl-S-(2E)-geranyl-thiouridine(34) in tRNA + selenophosphate + H(+) = 5-methylaminomethyl-2-(Se-phospho)selenouridine(34) in tRNA + (2E)-thiogeraniol. It carries out the reaction 5-methylaminomethyl-2-(Se-phospho)selenouridine(34) in tRNA + H2O = 5-methylaminomethyl-2-selenouridine(34) in tRNA + phosphate. In terms of biological role, involved in the post-transcriptional modification of the uridine at the wobble position (U34) of tRNA(Lys), tRNA(Glu) and tRNA(Gln). Catalyzes the conversion of 2-thiouridine (S2U-RNA) to 2-selenouridine (Se2U-RNA). Acts in a two-step process involving geranylation of 2-thiouridine (S2U) to S-geranyl-2-thiouridine (geS2U) and subsequent selenation of the latter derivative to 2-selenouridine (Se2U) in the tRNA chain. In Sulfurovum sp. (strain NBC37-1), this protein is tRNA 2-selenouridine synthase.